The following is a 545-amino-acid chain: CTP synthase (545 aa).

The interval 1–266 (MATNYIFVTG…DSFVCDRFRL (266 aa)) is amidoligase domain. Residue Ser14 participates in CTP binding. Ser14 lines the UTP pocket. ATP is bound by residues 15–20 (SLGKGI) and Asp72. Residues Asp72 and Glu140 each contribute to the Mg(2+) site. CTP-binding positions include 147-149 (DIE), 187-192 (KTKPTQ), and Lys223. Residues 187 to 192 (KTKPTQ) and Lys223 each bind UTP. Position 239 to 241 (239 to 241 (KDV)) interacts with ATP. A Glutamine amidotransferase type-1 domain is found at 291–542 (TIGMVGKYVE…VAAAKAYQDS (252 aa)). Residue Gly352 participates in L-glutamine binding. The Nucleophile; for glutamine hydrolysis role is filled by Cys379. Residues 380–383 (LGMQ), Glu403, and Arg470 contribute to the L-glutamine site. Active-site residues include His515 and Glu517.

This sequence belongs to the CTP synthase family. Homotetramer.

The catalysed reaction is UTP + L-glutamine + ATP + H2O = CTP + L-glutamate + ADP + phosphate + 2 H(+). The enzyme catalyses L-glutamine + H2O = L-glutamate + NH4(+). It carries out the reaction UTP + NH4(+) + ATP = CTP + ADP + phosphate + 2 H(+). Its pathway is pyrimidine metabolism; CTP biosynthesis via de novo pathway; CTP from UDP: step 2/2. Its activity is regulated as follows. Allosterically activated by GTP, when glutamine is the substrate; GTP has no effect on the reaction when ammonia is the substrate. The allosteric effector GTP functions by stabilizing the protein conformation that binds the tetrahedral intermediate(s) formed during glutamine hydrolysis. Inhibited by the product CTP, via allosteric rather than competitive inhibition. Its function is as follows. Catalyzes the ATP-dependent amination of UTP to CTP with either L-glutamine or ammonia as the source of nitrogen. Regulates intracellular CTP levels through interactions with the four ribonucleotide triphosphates. In Haemophilus ducreyi (strain 35000HP / ATCC 700724), this protein is CTP synthase.